A 252-amino-acid chain; its full sequence is 3-dehydroquinate dehydratase (252 aa).

Residues Ser21, 46–48 (EWR), and Arg82 each bind 3-dehydroquinate. His143 (proton donor/acceptor) is an active-site residue. Lys170 (schiff-base intermediate with substrate) is an active-site residue. 3-dehydroquinate contacts are provided by Arg213, Ser232, and Gln236.

The protein belongs to the type-I 3-dehydroquinase family. In terms of assembly, homodimer.

The catalysed reaction is 3-dehydroquinate = 3-dehydroshikimate + H2O. It participates in metabolic intermediate biosynthesis; chorismate biosynthesis; chorismate from D-erythrose 4-phosphate and phosphoenolpyruvate: step 3/7. Functionally, involved in the third step of the chorismate pathway, which leads to the biosynthesis of aromatic amino acids. Catalyzes the cis-dehydration of 3-dehydroquinate (DHQ) and introduces the first double bond of the aromatic ring to yield 3-dehydroshikimate. The protein is 3-dehydroquinate dehydratase of Escherichia coli O157:H7.